Consider the following 365-residue polypeptide: 1-acyl-sn-glycerol-3-phosphate acyltransferase epsilon (365 aa).

A helical membrane pass occupies residues 15 to 35 (LLPSVLLLGSAPTYLLAWTLW). The HXXXXD motif signature appears at 93–98 (HQSTVD). A helical transmembrane segment spans residues 345–365 (LYMGTWLYGTLLGCLWFVIKA).

The protein belongs to the 1-acyl-sn-glycerol-3-phosphate acyltransferase family. Widely expressed.

The protein resides in the endoplasmic reticulum membrane. It localises to the nucleus envelope. Its subcellular location is the mitochondrion. The enzyme catalyses a 1-acyl-sn-glycero-3-phosphate + an acyl-CoA = a 1,2-diacyl-sn-glycero-3-phosphate + CoA. It catalyses the reaction 1-(9Z-octadecenoyl)-sn-glycero-3-phosphate + tetradecanoyl-CoA = 1-(9Z)-octadecenoyl-2-tetradecanoyl-sn-glycero-3-phosphate + CoA. It carries out the reaction pentadecanoyl-CoA + 1-(9Z-octadecenoyl)-sn-glycero-3-phosphate = 1-(9Z)-octadecenoyl-2-pentadecanoyl-sn-glycero-3-phosphate + CoA. The catalysed reaction is 1-(9Z-octadecenoyl)-sn-glycero-3-phosphate + octadecanoyl-CoA = 1-(9Z-octadecenoyl)-2-octadecanoyl-sn-glycero-3-phosphate + CoA. The enzyme catalyses nonadecanoyl-CoA + 1-(9Z-octadecenoyl)-sn-glycero-3-phosphate = 1-(9Z)-octadecenoyl-2-nonadecanoyl-sn-glycero-3-phosphate + CoA. It catalyses the reaction 1-(9Z-octadecenoyl)-sn-glycero-3-phosphoethanolamine + (9Z)-octadecenoyl-CoA = 1,2-di-(9Z-octadecenoyl)-sn-glycero-3-phosphoethanolamine + CoA. It carries out the reaction 1-(9Z-octadecenoyl)-sn-glycero-3-phosphocholine + (9Z)-octadecenoyl-CoA = 1,2-di-(9Z-octadecenoyl)-sn-glycero-3-phosphocholine + CoA. The catalysed reaction is 1-(9Z-octadecenoyl)-sn-glycero-3-phospho-(1D-myo-inositol) + (5Z,8Z,11Z,14Z)-eicosatetraenoyl-CoA = 1-(9Z-octadecenoyl)-2-(5Z,8Z,11Z,14Z-eicosatetraenoyl)-sn-glycero-3-phospho-1D-myo-inositol + CoA. The enzyme catalyses 1-(9Z-octadecenoyl)-sn-glycero-3-phospho-L-serine + (9Z)-octadecenoyl-CoA = 1,2-di-(9Z)-octadecenoyl-sn-glycero-3-phospho-L-serine + CoA. It catalyses the reaction 1-(9Z-octadecenoyl)-sn-glycero-3-phospho-L-serine + (5Z,8Z,11Z,14Z)-eicosatetraenoyl-CoA = 1-(9Z-octadecenoyl)-2-(5Z,8Z,11Z,14Z-eicosatetraenoyl)-sn-glycero-3-phospho-L-serine + CoA. It carries out the reaction 1-hexadecanoyl-sn-glycero-3-phosphate + (9Z)-octadecenoyl-CoA = 1-hexadecanoyl-2-(9Z-octadecenoyl)-sn-glycero-3-phosphate + CoA. The catalysed reaction is 1-heptadecanoyl-sn-glycero-3-phosphate + (9Z)-octadecenoyl-CoA = 1-heptadecanoyl-2-(9Z)-octadecenoyl-sn-glycero-3-phosphate + CoA. The enzyme catalyses 1-(5Z,8Z,11Z,14Z-eicosatetraenoyl)-sn-glycero-3-phosphate + (9Z)-octadecenoyl-CoA = 1-(5Z,8Z,11Z,14Z)-eicosatetraenoyl-2-(9Z)-octadecenoyl-sn-glycero-3-phosphate + CoA. It catalyses the reaction 1-octadecanoyl-sn-glycero-3-phosphate + (9Z)-octadecenoyl-CoA = 1-octadecanoyl-2-(9Z-octadecenoyl)-sn-glycero-3-phosphate + CoA. It carries out the reaction 1-(9Z-octadecenoyl)-sn-glycero-3-phosphate + (5Z,8Z,11Z,14Z)-eicosatetraenoyl-CoA = 1-(9Z)-octadecenoyl-2-(5Z,8Z,11Z,14Z)-eicosatetraenoyl-sn-glycero-3-phosphate + CoA. The catalysed reaction is heptadecanoyl-CoA + 1-(9Z-octadecenoyl)-sn-glycero-3-phosphate = 1-(9Z)-octadecenoyl-2-heptadecanoyl-sn-glycero-3-phosphate + CoA. The enzyme catalyses 1-(9Z-octadecenoyl)-sn-glycero-3-phosphocholine + (5Z,8Z,11Z,14Z)-eicosatetraenoyl-CoA = 1-(9Z)-octadecenoyl-2-(5Z,8Z,11Z,14Z)-icosatetraenoyl-sn-glycero-3-phosphocholine + CoA. It catalyses the reaction 1-(9Z-octadecenoyl)-sn-glycero-3-phosphate + (9Z)-octadecenoyl-CoA = 1,2-di-(9Z-octadecenoyl)-sn-glycero-3-phosphate + CoA. It carries out the reaction 1-(9Z-octadecenoyl)-sn-glycero-3-phosphate + hexadecanoyl-CoA = 1-hexadecanoyl-2-(9Z-octadecenoyl)-sn-glycero-3-phosphate + CoA. The protein operates within phospholipid metabolism; CDP-diacylglycerol biosynthesis; CDP-diacylglycerol from sn-glycerol 3-phosphate: step 2/3. In terms of biological role, converts 1-acyl-sn-glycerol-3-phosphate (lysophosphatidic acid or LPA) into 1,2-diacyl-sn-glycerol-3-phosphate (phosphatidic acid or PA) by incorporating an acyl moiety at the sn-2 position of the glycerol backbone. Acts on LPA containing saturated or unsaturated fatty acids C15:0-C20:4 at the sn-1 position using C18:1-CoA as the acyl donor. Also acts on lysophosphatidylethanolamine using oleoyl-CoA, but not arachidonoyl-CoA, and lysophosphatidylinositol using arachidonoyl-CoA, but not oleoyl-CoA. Activity toward lysophosphatidylglycerol not detectable. In Mus musculus (Mouse), this protein is 1-acyl-sn-glycerol-3-phosphate acyltransferase epsilon (Agpat5).